An 82-amino-acid chain; its full sequence is Ice-structuring protein B (82 aa).

An N-terminal signal peptide occupies residues Met-1 to Ala-23. Positions Arg-24–Pro-44 are cleaved as a propeptide — removed by a dipeptidylpeptidase. Arg-81 carries the post-translational modification Arginine amide.

It belongs to the type-I AFP family. Post-translationally, amidated. Detected in liver (at protein level).

It is found in the secreted. The protein resides in the extracellular space. Its function is as follows. Contributes to protect fish blood from freezing at subzero sea water temperatures. Lowers the blood freezing point. Binds to nascent ice crystals and prevents further growth. This Pseudopleuronectes americanus (Winter flounder) protein is Ice-structuring protein B.